A 116-amino-acid polypeptide reads, in one-letter code: Spexin (116 aa).

Residues 1-26 (MKGLRSLAATTLALFLVFVFLGNSSC) form the signal peptide. A propeptide spanning residues 27–35 (APQRLLERR) is cleaved from the precursor. Residue Gln-49 is modified to Glutamine amide. 2 consecutive propeptides follow at residues 50–116 (GRRF…LLNW) and 74–116 (PNPQ…LLNW). Basic and acidic residues predominate over residues 55-73 (SDQSRRKDLSDRPLPERRS). The disordered stretch occupies residues 55–77 (SDQSRRKDLSDRPLPERRSPNPQ).

It belongs to the spexin family. In terms of tissue distribution, expressed in the type I glomic cells within the carotid body (at protein level). Expressed predominantly in pancreas, testis, kidney, brain and placenta. Expressed in submucosal layer of esophagus and stomach fundus.

It localises to the secreted. The protein localises to the extracellular space. The protein resides in the cytoplasmic vesicle. It is found in the secretory vesicle. Functionally, plays a role as a central modulator of cardiovascular and renal function and nociception. Also plays a role in energy metabolism and storage. Inhibits adrenocortical cell proliferation with minor stimulation on corticosteroid release. Its function is as follows. Acts as a ligand for galanin receptors GALR2 and GALR3. Intracerebroventricular administration of the peptide induces an increase in arterial blood pressure, a decrease in both heart rate and renal excretion and delayed natriuresis. Intraventricular administration of the peptide induces antinociceptive activity. Also induces contraction of muscarinic-like stomach smooth muscles. Intraperitoneal administration of the peptide induces a reduction in food consumption and body weight. Inhibits long chain fatty acid uptake into adipocytes. In terms of biological role, intracerebroventricular administration of the peptide induces a decrease in heart rate, but no change in arterial pressure, and an increase in urine flow rate. Intraventricular administration of the peptide induces antinociceptive activity. In Homo sapiens (Human), this protein is Spexin (SPX).